Consider the following 319-residue polypeptide: MNATLTSLFNIFGILGTLLTLAALLIWIERRLLGFWQERYGPNRVGPFGILQVVADAIKLLTKEDWVPPFADKLVFILAPTVVVIATLLAFAVIPFTPYIGIIDLNIGLLFFLAMSSLSVYSVVLGGWASNNKYSLMGALRAAAQMLSYEVFMGLSLMGVVMLAGTFNLREIVAAQQDMWFCIPQFLGLVVFLIAGIAEAHRLPFDLPEAETELIAGFHTEYSGMKFGLFFVGEYLAILLISALIVTLFFGGWQGPWLPPLVWFFIKFSFFVLFFILLRAALPRPRYDQLMAYGWKLMLPLALLNLVITGAVVLALDGT.

Transmembrane regions (helical) follow at residues 8–28 (LFNI…LIWI), 74–94 (LVFI…FAVI), 107–127 (IGLL…VLGG), 147–167 (LSYE…AGTF), 179–199 (MWFC…GIAE), 230–250 (FFVG…TLFF), 258–278 (LPPL…FILL), and 297–317 (LMLP…LALD).

This sequence belongs to the complex I subunit 1 family. In terms of assembly, NDH-1 is composed of 14 different subunits. Subunits NuoA, H, J, K, L, M, N constitute the membrane sector of the complex.

The protein localises to the cell inner membrane. It catalyses the reaction a quinone + NADH + 5 H(+)(in) = a quinol + NAD(+) + 4 H(+)(out). Functionally, NDH-1 shuttles electrons from NADH, via FMN and iron-sulfur (Fe-S) centers, to quinones in the respiratory chain. The immediate electron acceptor for the enzyme in this species is believed to be ubiquinone. Couples the redox reaction to proton translocation (for every two electrons transferred, four hydrogen ions are translocated across the cytoplasmic membrane), and thus conserves the redox energy in a proton gradient. This subunit may bind ubiquinone. In Nitrosococcus oceani (strain ATCC 19707 / BCRC 17464 / JCM 30415 / NCIMB 11848 / C-107), this protein is NADH-quinone oxidoreductase subunit H 1.